We begin with the raw amino-acid sequence, 266 residues long: MRLIPLATAEQVGKWAARHIVNRINAFKPTADRPFVLGLPTGGTPLTAYKALVEMHKAGQVSFKHVVTFNMDEYVGLAKEHPESYHSFMHRNFFDHVDIPAENINLLNGNAPDIDAECRQYEEKIRSYGKINLFMGGVGNDGHIAFNEPASSLASRTRIKTLTHDTRVANSRFFDGDVSQVPKYALTVGVGTLLDAEEVMILVLGNVKAQALQAAVEGNVNHMWTISCLQLHPKAVVVCDEPSTMELKVKTLKYFNELEAENIKGL.

The active-site Proton acceptor; for enolization step is Asp72. Asp141 (for ring-opening step) is an active-site residue. His143 functions as the Proton acceptor; for ring-opening step in the catalytic mechanism. The active-site For ring-opening step is the Glu148.

Belongs to the glucosamine/galactosamine-6-phosphate isomerase family. NagB subfamily. In terms of assembly, homohexamer.

It catalyses the reaction alpha-D-glucosamine 6-phosphate + H2O = beta-D-fructose 6-phosphate + NH4(+). The protein operates within amino-sugar metabolism; N-acetylneuraminate degradation; D-fructose 6-phosphate from N-acetylneuraminate: step 5/5. Allosterically activated by N-acetylglucosamine 6-phosphate (GlcNAc6P). Catalyzes the reversible isomerization-deamination of glucosamine 6-phosphate (GlcN6P) to form fructose 6-phosphate (Fru6P) and ammonium ion. This chain is Glucosamine-6-phosphate deaminase, found in Enterobacter sp. (strain 638).